We begin with the raw amino-acid sequence, 146 residues long: Cytochrome c-type biogenesis protein CcmE (146 aa).

Topologically, residues 1-8 are cytoplasmic; it reads MHPKRKKR. The chain crosses the membrane as a helical; Signal-anchor for type II membrane protein span at residues 9–29; it reads LLIVLAGLAVVAVASGLILNA. Over 30–146 the chain is Periplasmic; sequence FRSNLVFFHT…IQRAGETVVQ (117 aa). The heme site is built by H124 and Y128.

Belongs to the CcmE/CycJ family.

It localises to the cell inner membrane. Functionally, heme chaperone required for the biogenesis of c-type cytochromes. Transiently binds heme delivered by CcmC and transfers the heme to apo-cytochromes in a process facilitated by CcmF and CcmH. The chain is Cytochrome c-type biogenesis protein CcmE from Laribacter hongkongensis (strain HLHK9).